The chain runs to 273 residues: Large ribosomal subunit protein uL2 (273 aa).

Positions Arg221–Arg262 are disordered. Residues Lys253 to Arg262 are compositionally biased toward basic residues.

The protein belongs to the universal ribosomal protein uL2 family. Part of the 50S ribosomal subunit. Forms a bridge to the 30S subunit in the 70S ribosome.

One of the primary rRNA binding proteins. Required for association of the 30S and 50S subunits to form the 70S ribosome, for tRNA binding and peptide bond formation. It has been suggested to have peptidyltransferase activity; this is somewhat controversial. Makes several contacts with the 16S rRNA in the 70S ribosome. This Haemophilus ducreyi (strain 35000HP / ATCC 700724) protein is Large ribosomal subunit protein uL2.